A 333-amino-acid polypeptide reads, in one-letter code: Protein XAP5 CIRCADIAN TIMEKEEPER (333 aa).

Coiled coils occupy residues 12–43 and 70–116; these read AQDA…SDGQ and TREQ…VRGD. The segment covering 89 to 98 has biased composition (basic and acidic residues); sequence EKEKLQKLQQ. The interval 89–171 is disordered; sequence EKEKLQKLQQ…REREAEEQAE (83 aa). Residues 123–136 show a composition bias toward acidic residues; the sequence is DEIENGSDEDEFEN. The span at 160–171 shows a compositional bias: basic and acidic residues; sequence PDREREAEEQAE.

The protein belongs to the FAM50 family.

Its subcellular location is the nucleus. Involved in light regulation of the circadian clock and photomorphogenesis. The polypeptide is Protein XAP5 CIRCADIAN TIMEKEEPER (XCT) (Oryza sativa subsp. indica (Rice)).